Consider the following 559-residue polypeptide: Transcription activator of gluconeogenesis ERT1-2 (559 aa).

The zn(2)-C6 fungal-type DNA-binding region spans 23–51 (CIHCQRTHLTCDNNRPCERCVARGFADTC). 3 disordered regions span residues 63–159 (DDKE…TPSQ), 231–263 (SNSL…TPSA), and 329–349 (AGQP…DSPS). Low complexity-rich tracts occupy residues 139 to 159 (QGPQ…TPSQ) and 231 to 244 (SNSL…QSPN). Over residues 245-260 (THSPHNQDQPTPQAAT) the composition is skewed to polar residues. A PAS domain is found at 440–512 (ALLEYQKFIS…ELFSRIAFGD (73 aa)).

Belongs to the ERT1/acuK family.

Its subcellular location is the nucleus. Transcription factor which regulates nonfermentable carbon utilization. Activator of gluconeogenetic genes. This Yarrowia lipolytica (strain CLIB 122 / E 150) (Yeast) protein is Transcription activator of gluconeogenesis ERT1-2 (ERT1-2).